Consider the following 125-residue polypeptide: Methylglyoxal synthase (125 aa).

Positions 1 to 125 constitute an MGS-like domain; sequence MTQRLRIALI…TAEKLVRALD (125 aa). Substrate-binding positions include H12, K16, 38-41, and 59-60; these read TGTT and SG. The active-site Proton donor/acceptor is the D65. H92 contacts substrate.

Belongs to the methylglyoxal synthase family.

The catalysed reaction is dihydroxyacetone phosphate = methylglyoxal + phosphate. Functionally, catalyzes the formation of methylglyoxal from dihydroxyacetone phosphate. This is Methylglyoxal synthase from Brucella abortus (strain S19).